Reading from the N-terminus, the 83-residue chain is Exodeoxyribonuclease 7 small subunit (83 aa).

This sequence belongs to the XseB family. Heterooligomer composed of large and small subunits.

The protein resides in the cytoplasm. The enzyme catalyses Exonucleolytic cleavage in either 5'- to 3'- or 3'- to 5'-direction to yield nucleoside 5'-phosphates.. Functionally, bidirectionally degrades single-stranded DNA into large acid-insoluble oligonucleotides, which are then degraded further into small acid-soluble oligonucleotides. This chain is Exodeoxyribonuclease 7 small subunit, found in Moorella thermoacetica (strain ATCC 39073 / JCM 9320).